Reading from the N-terminus, the 211-residue chain is Histone H1-beta, late embryonic (211 aa).

Disordered stretches follow at residues 1–22 (MAAEQKKVAKKPRAKPAHPSSS) and 81–211 (KGAS…AAKK). The H15 domain occupies 17–91 (AHPSSSEMVL…GASGSFKLGK (75 aa)). Composition is skewed to basic and acidic residues over residues 95–107 (GKSDAQKAPDAAK) and 114–123 (KKKEAKEKKA). 2 stretches are compositionally biased toward basic residues: residues 124-177 (ARSK…KKAA) and 185-211 (KAAKKPAAKKAAKKVAKKPAAKKAAKK).

The protein belongs to the histone H1/H5 family.

Its subcellular location is the nucleus. It localises to the chromosome. Its function is as follows. Histones H1 are necessary for the condensation of nucleosome chains into higher-order structures. This chain is Histone H1-beta, late embryonic, found in Strongylocentrotus purpuratus (Purple sea urchin).